Here is a 374-residue protein sequence, read N- to C-terminus: MSSFAEARIDLDAISGNIALLAERAAGAQVMGVVKADGYGHGMVPAARAALAGGATWLGTAFIAEALQLRAAGIDAPILAWLVPPGEPLTEAIDAGIDLGIGSMWVINEVIDAARQARRQARIHLKVDTGLNRGGIGPADWSAAAAALARAEAAGLLTVTGVFSHLACADEPDNPATTAQLEAFHQALSVVDKAGLHPQVRHIANSAALLTRPDARFDLVRPGIATYGLSPIPGLDVPGLRPAMTLSATLVGCKRVRPGSGVSYGYRYVTDRETNLALVPLGYGDGVPRAATNRAPVFVAGRRRTIAGTVCMDQFVVDIGDDTVTPGDRAILFGPGDHGEPTAQDWADALDTISYEIVTRIGRRVPRVYTGAVR.

The active-site Proton acceptor; specific for D-alanine is K35. N6-(pyridoxal phosphate)lysine is present on K35. Position 133 (R133) interacts with substrate. Y264 serves as the catalytic Proton acceptor; specific for L-alanine. M312 lines the substrate pocket.

The protein belongs to the alanine racemase family. The cofactor is pyridoxal 5'-phosphate.

The enzyme catalyses L-alanine = D-alanine. Its pathway is amino-acid biosynthesis; D-alanine biosynthesis; D-alanine from L-alanine: step 1/1. Its function is as follows. Catalyzes the interconversion of L-alanine and D-alanine. May also act on other amino acids. This chain is Alanine racemase (alr), found in Thermobifida fusca (strain YX).